We begin with the raw amino-acid sequence, 299 residues long: Phosphoribosylaminoimidazole-succinocarboxamide synthase (299 aa).

It belongs to the SAICAR synthetase family.

The catalysed reaction is 5-amino-1-(5-phospho-D-ribosyl)imidazole-4-carboxylate + L-aspartate + ATP = (2S)-2-[5-amino-1-(5-phospho-beta-D-ribosyl)imidazole-4-carboxamido]succinate + ADP + phosphate + 2 H(+). It participates in purine metabolism; IMP biosynthesis via de novo pathway; 5-amino-1-(5-phospho-D-ribosyl)imidazole-4-carboxamide from 5-amino-1-(5-phospho-D-ribosyl)imidazole-4-carboxylate: step 1/2. In Streptomyces coelicolor (strain ATCC BAA-471 / A3(2) / M145), this protein is Phosphoribosylaminoimidazole-succinocarboxamide synthase.